The following is a 288-amino-acid chain: Phosphopantetheinyl transferase (288 aa).

Residues Arg60, 99–104 (RTEMGK), and 118–121 (NLSH) each bind CoA. Positions 139 and 196 each coordinate Mg(2+). A CoA-binding site is contributed by 196-200 (EAYLK).

It belongs to the P-Pant transferase superfamily. AcpS family. As to quaternary structure, monomer.

The protein resides in the cytoplasm. The protein localises to the cytosol. The catalysed reaction is apo-[ACP] + CoA = holo-[ACP] + adenosine 3',5'-bisphosphate + H(+). Its pathway is lipid metabolism; fatty acid biosynthesis. Functionally, phosphopantetheinyl transferase that is essential for attaching phosphopantetheine to ACP domains of the polyunsaturated fatty acid (PUFA) synthase converting the inactive apo-synthase to the active holo-synthase. This Thraustochytrium sp. (strain ATCC 26185 / S-3) protein is Phosphopantetheinyl transferase.